Reading from the N-terminus, the 268-residue chain is Tryptophan synthase alpha chain (268 aa).

Catalysis depends on proton acceptor residues Glu-49 and Asp-60.

This sequence belongs to the TrpA family. As to quaternary structure, tetramer of two alpha and two beta chains.

It carries out the reaction (1S,2R)-1-C-(indol-3-yl)glycerol 3-phosphate + L-serine = D-glyceraldehyde 3-phosphate + L-tryptophan + H2O. It functions in the pathway amino-acid biosynthesis; L-tryptophan biosynthesis; L-tryptophan from chorismate: step 5/5. Functionally, the alpha subunit is responsible for the aldol cleavage of indoleglycerol phosphate to indole and glyceraldehyde 3-phosphate. The polypeptide is Tryptophan synthase alpha chain (Edwardsiella ictaluri (strain 93-146)).